The primary structure comprises 255 residues: 3-dehydroquinate dehydratase (255 aa).

Residues E47–R49 and R83 each bind 3-dehydroquinate. Catalysis depends on H145, which acts as the Proton donor/acceptor. The active-site Schiff-base intermediate with substrate is K172. 3-dehydroquinate-binding residues include R215, S234, and Q238.

The protein belongs to the type-I 3-dehydroquinase family. In terms of assembly, homodimer.

The catalysed reaction is 3-dehydroquinate = 3-dehydroshikimate + H2O. It participates in metabolic intermediate biosynthesis; chorismate biosynthesis; chorismate from D-erythrose 4-phosphate and phosphoenolpyruvate: step 3/7. In terms of biological role, involved in the third step of the chorismate pathway, which leads to the biosynthesis of aromatic amino acids. Catalyzes the cis-dehydration of 3-dehydroquinate (DHQ) and introduces the first double bond of the aromatic ring to yield 3-dehydroshikimate. This is 3-dehydroquinate dehydratase from Clostridium kluyveri (strain NBRC 12016).